The chain runs to 264 residues: 3-methyl-2-oxobutanoate hydroxymethyltransferase (264 aa).

Mg(2+) is bound by residues aspartate 44 and aspartate 83. 3-methyl-2-oxobutanoate-binding positions include 44–45 (DS), aspartate 83, and lysine 112. Residue glutamate 114 coordinates Mg(2+). Glutamate 181 (proton acceptor) is an active-site residue.

Belongs to the PanB family. As to quaternary structure, homodecamer; pentamer of dimers. The cofactor is Mg(2+).

Its subcellular location is the cytoplasm. It carries out the reaction 3-methyl-2-oxobutanoate + (6R)-5,10-methylene-5,6,7,8-tetrahydrofolate + H2O = 2-dehydropantoate + (6S)-5,6,7,8-tetrahydrofolate. The protein operates within cofactor biosynthesis; coenzyme A biosynthesis. In terms of biological role, catalyzes the reversible reaction in which hydroxymethyl group from 5,10-methylenetetrahydrofolate is transferred onto alpha-ketoisovalerate to form ketopantoate. This chain is 3-methyl-2-oxobutanoate hydroxymethyltransferase, found in Pyrobaculum arsenaticum (strain DSM 13514 / JCM 11321 / PZ6).